A 401-amino-acid polypeptide reads, in one-letter code: Diphosphomevalonate decarboxylase (401 aa).

A2 bears the N-acetylalanine mark. Residues 24–27 (YWGK), R79, 157–162 (SGSACR), and T213 contribute to the (R)-5-diphosphomevalonate site. Positions 382 to 401 (VLDDPHHHLLGPDGLPQRDL) are disordered.

This sequence belongs to the diphosphomevalonate decarboxylase family. Homodimer.

The protein localises to the cytoplasm. The catalysed reaction is (R)-5-diphosphomevalonate + ATP = isopentenyl diphosphate + ADP + phosphate + CO2. Its pathway is steroid biosynthesis; cholesterol biosynthesis. Functionally, catalyzes the ATP dependent decarboxylation of (R)-5-diphosphomevalonate to form isopentenyl diphosphate (IPP). Functions in the mevalonate (MVA) pathway leading to isopentenyl diphosphate (IPP), a key precursor for the biosynthesis of isoprenoids and sterol synthesis. The protein is Diphosphomevalonate decarboxylase (Mvd) of Rattus norvegicus (Rat).